Consider the following 113-residue polypeptide: Iron-sulfur cluster insertion protein ErpA (113 aa).

Iron-sulfur cluster contacts are provided by C41, C105, and C107.

This sequence belongs to the HesB/IscA family. In terms of assembly, homodimer. Iron-sulfur cluster is required as a cofactor.

Required for insertion of 4Fe-4S clusters for at least IspG. The polypeptide is Iron-sulfur cluster insertion protein ErpA (Vibrio vulnificus (strain YJ016)).